The following is a 328-amino-acid chain: MVSVQNLKTDQLLNFLFKNPTKFLSRFSPMAKNKTLVTPSTVKKSSDVASTSKKLSGVASPAKKPSGVTSPVKKPLEAVASTSSEEEEEDEPSSDSESGSESESDTEAEPMTLAAAAPSSSNEKRQSEGKPEEERAKTETETGKKPLLFQRLWTDEDEIVFLQGMIKFAKDTGKNVSEDMNGFFEKLKDSISFEVKTDQFVNKIRSMKRKYIENKKTTTEHDKKCYELAEIIWVSDGDATALVKPKKKKLKVDEESDWFERSFVDGAFKELGPGVDEETWKKNWSLVPVKKRKRIEEKVKSMQADELKTTWQKIDVVHEMRSLMAKYV.

The interval 31 to 143 (AKNKTLVTPS…ERAKTETETG (113 aa)) is disordered. Polar residues predominate over residues 35-54 (TLVTPSTVKKSSDVASTSKK). The segment covering 84 to 108 (SEEEEEDEPSSDSESGSESESDTEA) has biased composition (acidic residues). Residues 122-143 (NEKRQSEGKPEEERAKTETETG) are compositionally biased toward basic and acidic residues.

It belongs to the GeBP family.

In Arabidopsis thaliana (Mouse-ear cress), this protein is Probable transcription factor At4g00610.